The sequence spans 512 residues: D-alanine--D-alanyl carrier protein ligase (512 aa).

An ATP-binding site is contributed by T152–S153. D199 lines the D-alanine pocket. ATP is bound at residue N294–T299. V303 is a binding site for D-alanine. Residues D385, Y397–R400, and K499 contribute to the ATP site. K499 serves as a coordination point for D-alanine.

This sequence belongs to the ATP-dependent AMP-binding enzyme family. DltA subfamily.

It is found in the cytoplasm. It catalyses the reaction holo-[D-alanyl-carrier protein] + D-alanine + ATP = D-alanyl-[D-alanyl-carrier protein] + AMP + diphosphate. It functions in the pathway cell wall biogenesis; lipoteichoic acid biosynthesis. Catalyzes the first step in the D-alanylation of lipoteichoic acid (LTA), the activation of D-alanine and its transfer onto the D-alanyl carrier protein (Dcp) DltC. In an ATP-dependent two-step reaction, forms a high energy D-alanyl-AMP intermediate, followed by transfer of the D-alanyl residue as a thiol ester to the phosphopantheinyl prosthetic group of the Dcp. D-alanylation of LTA plays an important role in modulating the properties of the cell wall in Gram-positive bacteria, influencing the net charge of the cell wall. This is D-alanine--D-alanyl carrier protein ligase from Streptococcus equi subsp. equi (strain 4047).